A 418-amino-acid chain; its full sequence is Lactate dehydrogenase (NAD(+),ferredoxin) subunit LctC (418 aa).

FAD is bound by residues R285, 325-328, 343-348, N362, and 380-381; these read IGLS, SGAVQF, and DL.

The protein belongs to the ETF alpha-subunit/FixB family. In terms of assembly, part of the stable heterotrimeric lactate dehydrogenase-Etf complex, which is formed by the lactate dehydrogenase LctD and the electron-transferring flavoprotein (Etf) alpha (LctC) and beta (LctB) subunits. Requires FAD as cofactor. [4Fe-4S] cluster serves as cofactor.

The protein localises to the cytoplasm. It catalyses the reaction lactate + 2 reduced [2Fe-2S]-[ferredoxin] + 2 NAD(+) = 2 oxidized [2Fe-2S]-[ferredoxin] + pyruvate + 2 NADH. With respect to regulation, activity is stimulated by divalent cations. Highest stimulation is observed with Ca(2+). Its function is as follows. The lactate dehydrogenase-Etf complex catalyzes the oxidation of lactate to pyruvate. It uses flavin-based electron confurcation to drive endergonic lactate oxidation with NAD(+) as oxidant at the expense of simultaneous exergonic electron flow from reduced ferredoxin to NAD(+). The electron transfer flavoprotein (Etf) mediates the electron transfer between the different donors and acceptors. This is Lactate dehydrogenase (NAD(+),ferredoxin) subunit LctC from Acetobacterium woodii (strain ATCC 29683 / DSM 1030 / JCM 2381 / KCTC 1655 / WB1).